We begin with the raw amino-acid sequence, 596 residues long: Proton channel OTOP3 (596 aa).

Positions Met-1–Ser-21 are enriched in low complexity. The segment at Met-1–Ala-59 is disordered. At Met-1–Gln-88 the chain is on the cytoplasmic side. Phosphoserine is present on residues Ser-21 and Ser-23. Positions Ala-43–Ala-59 are enriched in basic and acidic residues. The helical transmembrane segment at Leu-89–Met-109 threads the bilayer. Topologically, residues Ile-110–Gly-119 are extracellular. Residues Asp-120–Thr-143 form a helical membrane-spanning segment. The Cytoplasmic segment spans residues Thr-144–Pro-159. A helical membrane pass occupies residues Leu-160–Val-181. Residues Gly-182–Gln-193 are Extracellular-facing. A helical membrane pass occupies residues Leu-194–Cys-217. Residues Lys-218–Thr-225 are Cytoplasmic-facing. A helical membrane pass occupies residues Asn-226–Thr-248. Residues Asn-249–Pro-295 are Extracellular-facing. A helical transmembrane segment spans residues Phe-296–Trp-312. The Cytoplasmic portion of the chain corresponds to Lys-313–Ile-338. A helical membrane pass occupies residues Phe-339 to Phe-358. Residues Gln-359–Phe-372 lie on the Extracellular side of the membrane. Residues Thr-373–Ala-395 traverse the membrane as a helical segment. The Cytoplasmic portion of the chain corresponds to Ile-396–Ser-413. The helical transmembrane segment at Leu-414–Val-435 threads the bilayer. The Extracellular segment spans residues Ala-436–Leu-446. Residues Asn-447–Ile-469 form a helical membrane-spanning segment. The Cytoplasmic segment spans residues Glu-470–Glu-529. Residues Ile-530 to Phe-547 form a helical membrane-spanning segment. Topologically, residues Gly-548–Ile-566 are extracellular. Residues Trp-567–Leu-589 form a helical membrane-spanning segment. Topologically, residues Val-590–Ala-596 are cytoplasmic.

This sequence belongs to the otopetrin family. As to quaternary structure, homodimer.

It is found in the cell membrane. It catalyses the reaction H(+)(in) = H(+)(out). Activated by extracellular acidification. Activated by Zn(2+) under non-acidic conditions. Proton-selective channel gated by extracellular protons. The polypeptide is Proton channel OTOP3 (Homo sapiens (Human)).